A 764-amino-acid chain; its full sequence is PFL-like enzyme TdcE (764 aa).

Positions Thr-7–Arg-629 constitute a PFL domain. Residue Cys-423 is the S-acetylcysteine intermediate of the active site. The active-site Cysteine radical intermediate is Cys-424. The segment at Gly-622 to Asp-645 is disordered. The region spanning Pro-636–Leu-764 is the Glycine radical domain. Gly-739 is subject to Glycine radical.

Belongs to the glycyl radical enzyme (GRE) family. PFL subfamily.

The protein localises to the cytoplasm. The catalysed reaction is 2-oxobutanoate + CoA = propanoyl-CoA + formate. It catalyses the reaction formate + acetyl-CoA = pyruvate + CoA. It participates in amino-acid degradation; L-threonine degradation via propanoate pathway; propanoate from L-threonine: step 2/4. Its activity is regulated as follows. Dependent on PFL-activase. Functionally, catalyzes the cleavage of 2-ketobutyrate to propionyl-CoA and formate. It can also use pyruvate as substrate. The protein is PFL-like enzyme TdcE (tdcE) of Escherichia coli (strain K12).